A 163-amino-acid polypeptide reads, in one-letter code: Bacterial microcompartment assembly protein PduM (163 aa).

The protein belongs to the PduM family. As to quaternary structure, interacts with shell protein PduK.

The protein resides in the bacterial microcompartment. The protein operates within polyol metabolism; 1,2-propanediol degradation. Plays an essential role in assembly and/or stability of the bacterial microcompartment (BMC) dedicated to 1,2-propanediol (1,2-PD) degradation. In terms of biological role, expression of a cosmid containing the full 21-gene pdu operon in E.coli allows E.coli to grow on 1,2-propanediol (1,2-PD) with the appearance of bacterial microcompartments (BMC) in its cytoplasm. Its function is as follows. The 1,2-PD-specific bacterial microcompartment (BMC) concentrates low levels of 1,2-PD catabolic enzymes, concentrates volatile reaction intermediates thus enhancing pathway flux and keeps the level of toxic, mutagenic propionaldehyde low. The protein is Bacterial microcompartment assembly protein PduM of Citrobacter freundii.